The sequence spans 364 residues: Chorismate synthase (364 aa).

NADP(+) contacts are provided by Arg48 and Arg54. Residues 125–127 (RSS), 238–239 (NA), Gly278, 293–297 (KPTSS), and Arg319 contribute to the FMN site.

Belongs to the chorismate synthase family. Homotetramer. The cofactor is FMNH2.

The catalysed reaction is 5-O-(1-carboxyvinyl)-3-phosphoshikimate = chorismate + phosphate. Its pathway is metabolic intermediate biosynthesis; chorismate biosynthesis; chorismate from D-erythrose 4-phosphate and phosphoenolpyruvate: step 7/7. Functionally, catalyzes the anti-1,4-elimination of the C-3 phosphate and the C-6 proR hydrogen from 5-enolpyruvylshikimate-3-phosphate (EPSP) to yield chorismate, which is the branch point compound that serves as the starting substrate for the three terminal pathways of aromatic amino acid biosynthesis. This reaction introduces a second double bond into the aromatic ring system. The protein is Chorismate synthase of Shewanella sediminis (strain HAW-EB3).